Reading from the N-terminus, the 659-residue chain is Alpha-amylase (659 aa).

Positions Met-1 to Gly-27 are cleaved as a signal peptide. Residues Pro-28 to Glu-41 constitute a propeptide that is removed on maturation. Residues Asn-142, Thr-178, Asp-187, Gly-210, and Asp-212 each coordinate Ca(2+). The active-site Nucleophile is Asp-217. His-221 provides a ligand contact to Ca(2+). The active-site Proton donor is the Glu-249.

Belongs to the glycosyl hydrolase 13 family. In terms of assembly, monomer. Requires Ca(2+) as cofactor.

Its subcellular location is the secreted. The catalysed reaction is Endohydrolysis of (1-&gt;4)-alpha-D-glucosidic linkages in polysaccharides containing three or more (1-&gt;4)-alpha-linked D-glucose units.. This Bacillus subtilis (strain 168) protein is Alpha-amylase (amyE).